The sequence spans 490 residues: Protein U94 (490 aa).

Residues 1–210 (MFSIINPSDD…SHFNKKPNVK (210 aa)) enclose the PV NS1-Nuc domain. An SF3 helicase domain is found at 312 to 463 (DPILAGTILY…IPRNFPVIQK (152 aa)). Residue 338–345 (GPPGCGKS) participates in ATP binding.

Its subcellular location is the host nucleus. In Human herpesvirus 6B (HHV-6 variant B), this protein is Protein U94 (U94).